Reading from the N-terminus, the 320-residue chain is o-succinylbenzoate synthase (320 aa).

The active-site Proton donor is the Lys-133. Asp-161, Glu-190, and Asp-213 together coordinate Mg(2+). The active-site Proton acceptor is the Lys-235.

This sequence belongs to the mandelate racemase/muconate lactonizing enzyme family. MenC type 1 subfamily. A divalent metal cation serves as cofactor.

The enzyme catalyses (1R,6R)-6-hydroxy-2-succinyl-cyclohexa-2,4-diene-1-carboxylate = 2-succinylbenzoate + H2O. It functions in the pathway quinol/quinone metabolism; 1,4-dihydroxy-2-naphthoate biosynthesis; 1,4-dihydroxy-2-naphthoate from chorismate: step 4/7. The protein operates within quinol/quinone metabolism; menaquinone biosynthesis. Converts 2-succinyl-6-hydroxy-2,4-cyclohexadiene-1-carboxylate (SHCHC) to 2-succinylbenzoate (OSB). This chain is o-succinylbenzoate synthase, found in Escherichia coli (strain SMS-3-5 / SECEC).